Here is a 1176-residue protein sequence, read N- to C-terminus: Carbamoyl phosphate synthase arginine-specific large chain (1176 aa).

The transit peptide at 1-11 (MLRSISIASRA) directs the protein to the mitochondrion. The tract at residues 70–465 (SRSPDVKKVL…SLQKAIRQVD (396 aa)) is carboxyphosphate synthetic domain. Positions 197, 237, 243, 244, 273, 275, 280, 306, 307, 308, 348, and 362 each coordinate ATP. The 191-residue stretch at 201–391 (VQALNEIDIP…LAYTAAKIAL (191 aa)) folds into the ATP-grasp 1 domain. Mg(2+) contacts are provided by glutamine 348, glutamate 362, and asparagine 364. The Mn(2+) site is built by glutamine 348, glutamate 362, and asparagine 364. The interval 466 to 610 (PNFAGFEAYW…YTSYNATTHD (145 aa)) is oligomerization domain. The carbamoyl phosphate synthetic domain stretch occupies residues 611 to 997 (VKFDNGTMVL…AYWAALLSVN (387 aa)). The region spanning 734 to 931 (SSILDSIGVD…FIDTASAAIM (198 aa)) is the ATP-grasp 2 domain. ATP-binding residues include arginine 770, glutamine 809, isoleucine 811, glutamate 816, glycine 841, valine 842, histidine 843, serine 844, glutamine 884, and glutamate 902. Mg(2+) contacts are provided by glutamine 884, glutamate 902, and asparagine 904. Mn(2+) contacts are provided by glutamine 884, glutamate 902, and asparagine 904. An allosteric domain region spans residues 998 to 1137 (GMKLPKANSG…NPIPYSEGFK (140 aa)). Residues 999–1154 (MKLPKANSGI…RDFVGEAATT (156 aa)) form the MGS-like domain.

It belongs to the CarB family. Heterodimer composed of 2 chains; the small (or glutamine) chain promotes the hydrolysis of glutamine to ammonia, which is used by the large (or ammonia) chain to synthesize carbamoyl phosphate. Requires Mg(2+) as cofactor. It depends on Mn(2+) as a cofactor.

The protein resides in the mitochondrion. The catalysed reaction is hydrogencarbonate + L-glutamine + 2 ATP + H2O = carbamoyl phosphate + L-glutamate + 2 ADP + phosphate + 2 H(+). It carries out the reaction hydrogencarbonate + NH4(+) + 2 ATP = carbamoyl phosphate + 2 ADP + phosphate + 2 H(+). The protein operates within amino-acid biosynthesis; L-arginine biosynthesis; carbamoyl phosphate from bicarbonate: step 1/1. Its function is as follows. Large subunit of the arginine-specific carbamoyl phosphate synthase (CPSase). CPSase catalyzes the formation of carbamoyl phosphate from the ammonia moiety of glutamine, hydrogencarbonate, and phosphate donated by ATP, constituting the first step of 2 biosynthetic pathways, one leading to arginine and/or urea and the other to pyrimidine nucleotides. The large subunit (synthetase) binds the substrates ammonia (free or transferred from glutamine from the small subunit), hydrogencarbonate and ATP and carries out an ATP-coupled ligase reaction, activating hydrogencarbonate by forming carboxy phosphate which reacts with ammonia to form carbamoyl phosphate. In Cutaneotrichosporon cutaneum (Yeast), this protein is Carbamoyl phosphate synthase arginine-specific large chain (argA).